Reading from the N-terminus, the 87-residue chain is Ribonuclease P protein component 1 (87 aa).

It belongs to the eukaryotic/archaeal RNase P protein component 1 family. Consists of a catalytic RNA component and at least 4-5 protein subunits.

The protein localises to the cytoplasm. It carries out the reaction Endonucleolytic cleavage of RNA, removing 5'-extranucleotides from tRNA precursor.. Part of ribonuclease P, a protein complex that generates mature tRNA molecules by cleaving their 5'-ends. The sequence is that of Ribonuclease P protein component 1 from Thermoplasma acidophilum (strain ATCC 25905 / DSM 1728 / JCM 9062 / NBRC 15155 / AMRC-C165).